Reading from the N-terminus, the 325-residue chain is Ribosomal RNA small subunit methyltransferase C (325 aa).

Belongs to the methyltransferase superfamily. RsmC family. In terms of assembly, monomer.

The protein localises to the cytoplasm. It carries out the reaction guanosine(1207) in 16S rRNA + S-adenosyl-L-methionine = N(2)-methylguanosine(1207) in 16S rRNA + S-adenosyl-L-homocysteine + H(+). In terms of biological role, specifically methylates the guanine in position 1207 of 16S rRNA in the 30S particle. The sequence is that of Ribosomal RNA small subunit methyltransferase C from Alcanivorax borkumensis (strain ATCC 700651 / DSM 11573 / NCIMB 13689 / SK2).